Consider the following 551-residue polypeptide: Calnexin homolog (551 aa).

The signal sequence occupies residues 1 to 26 (MVDRKEIPLAMGLLAVLLFFVASSSS). Residues 27–480 (FHLVRASDEV…EKGEKQPNLT (454 aa)) lie on the Lumenal side of the membrane. Ca(2+) contacts are provided by serine 44 and aspartate 75. Cysteine 118 and cysteine 153 are disulfide-bonded. An alpha-D-glucoside contacts are provided by tyrosine 122 and lysine 124. A glycan (N-linked (GlcNAc...) asparagine) is linked at asparagine 140. Tyrosine 144 and aspartate 151 together coordinate an alpha-D-glucoside. Residues 226-330 (ALIPSKTIPD…CGEWKRPTKS (105 aa)) form a disordered region. Positions 233–364 (IPDPDDKKPE…QEIPNPEYFE (132 aa)) are p domain (Extended arm). 2 stretches are compositionally biased toward basic and acidic residues: residues 234–269 (PDPDDKKPEDWDERAKIPDPEAVKPEDWDEDAPREI) and 276–295 (KPEPWLDHEPEVDDPEAKPE). Tandem repeats lie at residues 235-246 (DPDDKKPEDWDE), 252-263 (DPEAVKPEDWDE), 271-282 (DEEAEKPEPWLD), 289-299 (DPEAKPEDWDD), and 303-313 (GEWEAPKIENP). 2 4 X approximate repeats regions span residues 235-299 (DPDD…DWDD) and 303-360 (GEWE…IPNP). Over residues 296 to 305 (DWDDEEDGEW) the composition is skewed to acidic residues. Cysteine 315 and cysteine 321 are oxidised to a cystine. 3 tandem repeats follow at residues 322–332 (GEWKRPTKSNP), 336–346 (GKWSAPYIDNP), and 350–360 (GIWKPQEIPNP). Position 379 (glutamate 379) interacts with an alpha-D-glucoside. Aspartate 390 contacts Ca(2+). Residue asparagine 478 is glycosylated (N-linked (GlcNAc...) asparagine). Residues 481–501 (IGIIVSVVIVFVSIFFRLIFG) traverse the membrane as a helical segment. Residues 502–551 (GKKPANVEANVEKKKTNTETTSKQDGGEKEDNKEKEETANPPRRRPKRDN) are Cytoplasmic-facing. Residues 510-551 (ANVEKKKTNTETTSKQDGGEKEDNKEKEETANPPRRRPKRDN) are disordered. A compositionally biased stretch (basic and acidic residues) spans 526 to 539 (DGGEKEDNKEKEET).

The protein belongs to the calreticulin family. In terms of tissue distribution, in vegetative and flowering tissues.

Its subcellular location is the endoplasmic reticulum membrane. Functionally, calcium-binding protein that interacts with newly synthesized monoglucosylated glycoproteins in the endoplasmic reticulum. It may act in assisting protein assembly and/or in the retention within the ER of unassembled protein subunits. It seems to play a major role in the quality control apparatus of the ER by the retention of incorrectly folded proteins. In Pisum sativum (Garden pea), this protein is Calnexin homolog.